We begin with the raw amino-acid sequence, 398 residues long: 1-deoxy-D-xylulose 5-phosphate reductoisomerase (398 aa).

Residues threonine 10, glycine 11, serine 12, isoleucine 13, glycine 36, arginine 37, asparagine 38, and asparagine 124 each contribute to the NADPH site. Lysine 125 lines the 1-deoxy-D-xylulose 5-phosphate pocket. Residue glutamate 126 participates in NADPH binding. A Mn(2+)-binding site is contributed by aspartate 150. 1-deoxy-D-xylulose 5-phosphate contacts are provided by serine 151, glutamate 152, serine 186, and histidine 209. Residue glutamate 152 coordinates Mn(2+). Glycine 215 lines the NADPH pocket. Serine 222, asparagine 227, lysine 228, and glutamate 231 together coordinate 1-deoxy-D-xylulose 5-phosphate. Glutamate 231 is a Mn(2+) binding site.

Belongs to the DXR family. Homodimer. It depends on Mg(2+) as a cofactor. Mn(2+) serves as cofactor.

The enzyme catalyses 2-C-methyl-D-erythritol 4-phosphate + NADP(+) = 1-deoxy-D-xylulose 5-phosphate + NADPH + H(+). The protein operates within isoprenoid biosynthesis; isopentenyl diphosphate biosynthesis via DXP pathway; isopentenyl diphosphate from 1-deoxy-D-xylulose 5-phosphate: step 1/6. In terms of biological role, catalyzes the NADPH-dependent rearrangement and reduction of 1-deoxy-D-xylulose-5-phosphate (DXP) to 2-C-methyl-D-erythritol 4-phosphate (MEP). The protein is 1-deoxy-D-xylulose 5-phosphate reductoisomerase of Yersinia enterocolitica serotype O:8 / biotype 1B (strain NCTC 13174 / 8081).